The following is a 275-amino-acid chain: UDP-Gal:alpha-D-GlcNAc-diphosphoundecaprenol beta-1,3-galactosyltransferase (275 aa).

Belongs to the glycosyltransferase 2 family. Mn(2+) serves as cofactor.

It localises to the cell inner membrane. The catalysed reaction is N-acetyl-alpha-D-glucosaminyl-di-trans,octa-cis-undecaprenyl diphosphate + UDP-alpha-D-galactose = beta-D-Gal-(1-&gt;3)-alpha-D-GlcNAc-di-trans,octa-cis-undecaprenyl diphosphate + UDP + H(+). Its pathway is bacterial outer membrane biogenesis; LPS O-antigen biosynthesis. Catalyzes the addition of Gal, the second sugar moiety of the O7-antigen repeating unit, to GlcNAc-pyrophosphate-undecaprenol. The chain is UDP-Gal:alpha-D-GlcNAc-diphosphoundecaprenol beta-1,3-galactosyltransferase (wbbD) from Escherichia coli.